The primary structure comprises 423 residues: Glutamine synthetase, chloroplastic (423 aa).

The transit peptide at 1–51 directs the protein to the chloroplast; that stretch reads MAQAVVPAMQCRVGVKAAAGRVWSAGRTRTGRGGASPGFKVMAVSTGSTGV. Residues 70 to 150 form the GS beta-grasp domain; that stretch reads VIAEYIWVGG…VICDTYTPQG (81 aa). Residues 89 to 115 form a disordered region; it reads RTISKPVEDPSELPKWNYDGSSTGQAP. In terms of domain architecture, GS catalytic spans 154 to 423; sequence PTNKRHRAAQ…LAAKKLALKV (270 aa).

This sequence belongs to the glutamine synthetase family. In terms of assembly, homooctamer.

Its subcellular location is the plastid. The protein localises to the chloroplast. The enzyme catalyses L-glutamate + NH4(+) + ATP = L-glutamine + ADP + phosphate + H(+). Functionally, the light-modulated chloroplast enzyme, encoded by a nuclear gene and expressed primarily in leaves, is responsible for the reassimilation of the ammonia generated by photorespiration. The chain is Glutamine synthetase, chloroplastic (GLN2) from Zea mays (Maize).